The following is a 975-amino-acid chain: 5'-3' exoribonuclease 2 homolog (975 aa).

The segment at 262-279 (RACDLCGQYGHELKECRG) adopts a CCHC-type zinc-finger fold. Disordered regions lie at residues 424-443 (MQMYGGGGRGGRGRGRGRGQ) and 505-532 (SPADIASRKRKAEQPLIKPEEEEDEGPK). The interaction with paxt-1 stretch occupies residues 534 to 787 (DIRLYESGWK…GICVLYEDPE (254 aa)). Basic and acidic residues predominate over residues 804 to 821 (EPEKTLKPDDWNDRRDGR). The segment at 804-975 (EPEKTLKPDD…GGYHGNSSWR (172 aa)) is disordered. Gly residues-rich tracts occupy residues 850-860 (RGGGGGGGGYR), 886-895 (NYGGRDGGGP), and 908-932 (GYQGGGYGGGYGGGGGGGGGGGGGS).

Belongs to the 5'-3' exonuclease family. XRN2/RAT1 subfamily. As to quaternary structure, interacts with paxt-1 (via N-terminus); the interaction is direct and results in stabilization of xrn-2 in the complex. In terms of tissue distribution, expressed in the pharyngeal myoepithelium and intestine. Also expressed in several anterior neurons including the sensory neurons, as well as the interneuron PVT and the pharyngeal motorneuron M5.

It is found in the nucleus. Possesses 5'-&gt;3' exoribonuclease activity. Plays a role in maintenance of steady-state concentration and turnover of microRNAs (miRNA) by degradation of mature miRNA. Degradation role is enhanced when in complex with paxt-1. Partially redundant to xrn-1 in miRNA guide strand degradation. Implicated in differential regulation of mRNAs such as let-7 by controlling the accumulation of mature miRNA. Positively regulates molting of the pharyngeal cuticle. This chain is 5'-3' exoribonuclease 2 homolog, found in Caenorhabditis elegans.